Consider the following 168-residue polypeptide: Mediator of RNA polymerase II transcription subunit 7a (168 aa).

2 coiled-coil regions span residues 64-92 (KDSNLDYKNELRSLNRELQLHILELADVL) and 132-166 (IMELQIQQRKQAVEDIKRRREEAQRLLKDAYLTLD).

Belongs to the Mediator complex subunit 7 family. In terms of assembly, component of the Mediator complex. Interacts with MEE14/CBP1.

It is found in the nucleus. Functionally, component of the Mediator complex, a coactivator involved in the regulated transcription of nearly all RNA polymerase II-dependent genes. Mediator functions as a bridge to convey information from gene-specific regulatory proteins to the basal RNA polymerase II transcription machinery. The Mediator complex, having a compact conformation in its free form, is recruited to promoters by direct interactions with regulatory proteins and serves for the assembly of a functional pre-initiation complex with RNA polymerase II and the general transcription factors. The polypeptide is Mediator of RNA polymerase II transcription subunit 7a (MED7A) (Arabidopsis thaliana (Mouse-ear cress)).